The chain runs to 284 residues: Tropomyosin alpha-3 chain (284 aa).

Met-1 bears the N-acetylmethionine mark. Residues 1–40 (MEAIKKKMQMLKLDKENALDRAEQAEAEQKQAEERSKQLE) are disordered. Positions 1-284 (MEAIKKKMQM…DHALNDMTSI (284 aa)) form a coiled coil. Over residues 12-40 (KLDKENALDRAEQAEAEQKQAEERSKQLE) the composition is skewed to basic and acidic residues. The residue at position 53 (Thr-53) is a Phosphothreonine. 2 positions are modified to phosphoserine: Ser-61 and Ser-87. 2 positions are modified to phosphothreonine: Thr-108 and Thr-252. The residue at position 261 (Tyr-261) is a Phosphotyrosine. The residue at position 271 (Ser-271) is a Phosphoserine. Thr-282 carries the phosphothreonine modification. Ser-283 carries the phosphoserine modification.

Belongs to the tropomyosin family. As to quaternary structure, homodimer. Heterodimer of an alpha (TPM1, TPM3 or TPM4) and a beta (TPM2) chain. Interacts with TMOD1. Interacts with TNNT1.

It is found in the cytoplasm. Its subcellular location is the cytoskeleton. Binds to actin filaments in muscle and non-muscle cells. Plays a central role, in association with the troponin complex, in the calcium dependent regulation of vertebrate striated muscle contraction. Smooth muscle contraction is regulated by interaction with caldesmon. In non-muscle cells is implicated in stabilizing cytoskeleton actin filaments. The sequence is that of Tropomyosin alpha-3 chain (TPM3) from Sus scrofa (Pig).